A 350-amino-acid chain; its full sequence is NADH-cytochrome b5 reductase 2 (350 aa).

A helical membrane pass occupies residues 43–63; that stretch reads PLVLALGGVAGIGAWYGLGGF. Residues 96-204 form the FAD-binding FR-type domain; the sequence is DQFVEFTLKE…KGPIAKFAYK (109 aa). Residue 207 to 242 coordinates FAD; the sequence is EFESIGMIAGGSGITPMYQVIQDIASNPSDKTKVTL.

It belongs to the flavoprotein pyridine nucleotide cytochrome reductase family. The cofactor is FAD.

The protein localises to the mitochondrion outer membrane. It catalyses the reaction 2 Fe(III)-[cytochrome b5] + NADH = 2 Fe(II)-[cytochrome b5] + NAD(+) + H(+). May mediate the reduction of outer membrane cytochrome b5. The chain is NADH-cytochrome b5 reductase 2 (MCR1) from Mycosarcoma maydis (Corn smut fungus).